The primary structure comprises 371 residues: Putative glutamate--cysteine ligase 2 (371 aa).

The protein belongs to the glutamate--cysteine ligase type 2 family. YbdK subfamily.

The enzyme catalyses L-cysteine + L-glutamate + ATP = gamma-L-glutamyl-L-cysteine + ADP + phosphate + H(+). In terms of biological role, ATP-dependent carboxylate-amine ligase which exhibits weak glutamate--cysteine ligase activity. The protein is Putative glutamate--cysteine ligase 2 of Cupriavidus pinatubonensis (strain JMP 134 / LMG 1197) (Cupriavidus necator (strain JMP 134)).